A 451-amino-acid chain; its full sequence is Lipase member H (451 aa).

The N-terminal stretch at M1–S16 is a signal peptide. N-linked (GlcNAc...) asparagine glycosylation is present at N66. The active-site Nucleophile is S154. D178 serves as the catalytic Charge relay system. C233 and C246 form a disulfide bridge. The active-site Charge relay system is H248. 3 disulfides stabilise this stretch: C270/C281, C284/C292, and C427/C446.

Belongs to the AB hydrolase superfamily. Lipase family. In terms of assembly, interacts with TTMP/C3orf52. In terms of tissue distribution, expressed in placenta and colon. Weakly expressed in small intestine.

Its subcellular location is the secreted. It localises to the cell membrane. It carries out the reaction 1-hexadecanoyl-2-(9Z-octadecenoyl)-sn-glycero-3-phosphate + H2O = 2-(9Z-octadecenoyl)-sn-glycero-3-phosphate + hexadecanoate + H(+). Functionally, hydrolyzes specifically phosphatidic acid (PA) to produce 2-acyl lysophosphatidic acid (LPA; a potent bioactive lipid mediator) and fatty acid. Does not hydrolyze other phospholipids, like phosphatidylserine (PS), phosphatidylcholine (PC) and phosphatidylethanolamine (PE) or triacylglycerol (TG). This is Lipase member H (Liph) from Mus musculus (Mouse).